The chain runs to 417 residues: Serine--tRNA ligase (417 aa).

Residue 226-228 (TSE) coordinates L-serine. Residues 257–259 (RRE) and V273 each bind ATP. L-serine is bound at residue E280. ATP is bound at residue 344 to 347 (EVTS). Position 379 (T379) interacts with L-serine.

It belongs to the class-II aminoacyl-tRNA synthetase family. Type-1 seryl-tRNA synthetase subfamily. Homodimer. The tRNA molecule binds across the dimer.

The protein localises to the cytoplasm. The enzyme catalyses tRNA(Ser) + L-serine + ATP = L-seryl-tRNA(Ser) + AMP + diphosphate + H(+). The catalysed reaction is tRNA(Sec) + L-serine + ATP = L-seryl-tRNA(Sec) + AMP + diphosphate + H(+). The protein operates within aminoacyl-tRNA biosynthesis; selenocysteinyl-tRNA(Sec) biosynthesis; L-seryl-tRNA(Sec) from L-serine and tRNA(Sec): step 1/1. Its function is as follows. Catalyzes the attachment of serine to tRNA(Ser). Is also able to aminoacylate tRNA(Sec) with serine, to form the misacylated tRNA L-seryl-tRNA(Sec), which will be further converted into selenocysteinyl-tRNA(Sec). This Tropheryma whipplei (strain Twist) (Whipple's bacillus) protein is Serine--tRNA ligase.